Reading from the N-terminus, the 109-residue chain is Nucleoid-associated protein Sama_1311 (109 aa).

It belongs to the YbaB/EbfC family. As to quaternary structure, homodimer.

It is found in the cytoplasm. It localises to the nucleoid. Its function is as follows. Binds to DNA and alters its conformation. May be involved in regulation of gene expression, nucleoid organization and DNA protection. In Shewanella amazonensis (strain ATCC BAA-1098 / SB2B), this protein is Nucleoid-associated protein Sama_1311.